An 89-amino-acid chain; its full sequence is MSLSVEAKAKIVADFGRGTNDSGSTEVQVALLTAQINHLQGHFSEHKKDHHSRRGLLRMVSQRRKLLDYLKRKDVARYTSLIERLGLRR.

Belongs to the universal ribosomal protein uS15 family. In terms of assembly, part of the 30S ribosomal subunit. Forms a bridge to the 50S subunit in the 70S ribosome, contacting the 23S rRNA.

Its function is as follows. One of the primary rRNA binding proteins, it binds directly to 16S rRNA where it helps nucleate assembly of the platform of the 30S subunit by binding and bridging several RNA helices of the 16S rRNA. Functionally, forms an intersubunit bridge (bridge B4) with the 23S rRNA of the 50S subunit in the ribosome. The chain is Small ribosomal subunit protein uS15 from Pectobacterium carotovorum subsp. carotovorum (strain PC1).